A 98-amino-acid polypeptide reads, in one-letter code: Peptides MS9.1 (98 aa).

A signal peptide spans 1–21; that stretch reads MKQSLILAVLCLALVFATIEA. Residues 22–27 constitute a propeptide that is removed on maturation; sequence KPKADP. Intrachain disulfides connect C34-C46 and C37-C52. Propeptides lie at residues 63 to 64 and 92 to 98; these read DP and DPVRDAE.

It belongs to the sea anemone BBH family.

It is found in the secreted. The protein localises to the nematocyst. Its function is as follows. Acts as a positive modulator of mammalian TRPA1, a non-selective cation channel involved in detection of pain, in vitro yet has an analgesic and anti-inflammatory effect in vivo. The protein is Peptides MS9.1 of Metridium senile (Brown sea anemone).